We begin with the raw amino-acid sequence, 176 residues long: Adenine phosphoribosyltransferase (176 aa).

Belongs to the purine/pyrimidine phosphoribosyltransferase family. As to quaternary structure, homodimer.

It localises to the cytoplasm. It catalyses the reaction AMP + diphosphate = 5-phospho-alpha-D-ribose 1-diphosphate + adenine. It functions in the pathway purine metabolism; AMP biosynthesis via salvage pathway; AMP from adenine: step 1/1. Its function is as follows. Catalyzes a salvage reaction resulting in the formation of AMP, that is energically less costly than de novo synthesis. The chain is Adenine phosphoribosyltransferase from Leuconostoc mesenteroides subsp. mesenteroides (strain ATCC 8293 / DSM 20343 / BCRC 11652 / CCM 1803 / JCM 6124 / NCDO 523 / NBRC 100496 / NCIMB 8023 / NCTC 12954 / NRRL B-1118 / 37Y).